Reading from the N-terminus, the 453-residue chain is Pup--protein ligase (453 aa).

Glu9 serves as a coordination point for Mg(2+). Arg53 contacts ATP. Position 55 (Tyr55) interacts with Mg(2+). Asp57 acts as the Proton acceptor in catalysis. Glu63 is a Mg(2+) binding site. The ATP site is built by Thr66 and Trp420.

The protein belongs to the Pup ligase/Pup deamidase family. Pup-conjugating enzyme subfamily.

The catalysed reaction is ATP + [prokaryotic ubiquitin-like protein]-L-glutamate + [protein]-L-lysine = ADP + phosphate + N(6)-([prokaryotic ubiquitin-like protein]-gamma-L-glutamyl)-[protein]-L-lysine.. It functions in the pathway protein degradation; proteasomal Pup-dependent pathway. It participates in protein modification; protein pupylation. In terms of biological role, catalyzes the covalent attachment of the prokaryotic ubiquitin-like protein modifier Pup to the proteasomal substrate proteins, thereby targeting them for proteasomal degradation. This tagging system is termed pupylation. The ligation reaction involves the side-chain carboxylate of the C-terminal glutamate of Pup and the side-chain amino group of a substrate lysine. This is Pup--protein ligase from Nocardioides sp. (strain ATCC BAA-499 / JS614).